The sequence spans 454 residues: Asparagine--tRNA ligase (454 aa).

Belongs to the class-II aminoacyl-tRNA synthetase family. As to quaternary structure, homodimer.

It localises to the cytoplasm. It carries out the reaction tRNA(Asn) + L-asparagine + ATP = L-asparaginyl-tRNA(Asn) + AMP + diphosphate + H(+). The sequence is that of Asparagine--tRNA ligase from Mycoplasma capricolum subsp. capricolum (strain California kid / ATCC 27343 / NCTC 10154).